We begin with the raw amino-acid sequence, 476 residues long: Efflux pump atB (476 aa).

Positions 1–38 are disordered; that stretch reads MAPQLAGSSHSSSASDQAHRQSSDPALESGSDTHVGSI. 10 helical membrane passes run 69–89, 96–116, 127–147, 186–206, 264–284, 294–314, 347–367, 372–392, 403–425, and 440–460; these read LIVA…LAPL, KPVY…CAVA, FFNG…VGDL, WSFY…SLLV, LLLC…FGAF, FNLW…IIGI, LPPA…FAWT, VHWI…IMIF, YPLY…AAAF, and WAGF…YIFY.

This sequence belongs to the major facilitator superfamily.

Its subcellular location is the cell membrane. Functionally, efflux pump that might be required for efficient secretion of terreic acid. The polypeptide is Efflux pump atB (Aspergillus terreus (strain NIH 2624 / FGSC A1156)).